We begin with the raw amino-acid sequence, 67 residues long: ATP synthase F(0) complex subunit 8 (67 aa).

Residues 8–24 traverse the membrane as a helical segment; it reads TWFTTVLASSITLFILM. K54 is modified (N6-acetyllysine; alternate). K54 bears the N6-succinyllysine; alternate mark. An N6-acetyllysine modification is found at K57.

It belongs to the ATPase protein 8 family. As to quaternary structure, component of the ATP synthase complex composed at least of ATP5F1A/subunit alpha, ATP5F1B/subunit beta, ATP5MC1/subunit c (homooctomer), MT-ATP6/subunit a, MT-ATP8/subunit 8, ATP5ME/subunit e, ATP5MF/subunit f, ATP5MG/subunit g, ATP5MK/subunit k, ATP5MJ/subunit j, ATP5F1C/subunit gamma, ATP5F1D/subunit delta, ATP5F1E/subunit epsilon, ATP5PF/subunit F6, ATP5PB/subunit b, ATP5PD/subunit d, ATP5PO/subunit OSCP. ATP synthase complex consists of a soluble F(1) head domain (subunits alpha(3) and beta(3)) - the catalytic core - and a membrane F(0) domain - the membrane proton channel (subunits c, a, 8, e, f, g, k and j). These two domains are linked by a central stalk (subunits gamma, delta, and epsilon) rotating inside the F1 region and a stationary peripheral stalk (subunits F6, b, d, and OSCP). Interacts with PRICKLE3.

Its subcellular location is the mitochondrion membrane. Its function is as follows. Subunit 8, of the mitochondrial membrane ATP synthase complex (F(1)F(0) ATP synthase or Complex V) that produces ATP from ADP in the presence of a proton gradient across the membrane which is generated by electron transport complexes of the respiratory chain. ATP synthase complex consist of a soluble F(1) head domain - the catalytic core - and a membrane F(1) domain - the membrane proton channel. These two domains are linked by a central stalk rotating inside the F(1) region and a stationary peripheral stalk. During catalysis, ATP synthesis in the catalytic domain of F(1) is coupled via a rotary mechanism of the central stalk subunits to proton translocation. In vivo, can only synthesize ATP although its ATP hydrolase activity can be activated artificially in vitro. Part of the complex F(0) domain. This Cricetulus griseus (Chinese hamster) protein is ATP synthase F(0) complex subunit 8.